A 79-amino-acid polypeptide reads, in one-letter code: Sulfur carrier protein TusA (79 aa).

Cys17 acts as the Cysteine persulfide intermediate in catalysis.

The protein belongs to the sulfur carrier protein TusA family.

It localises to the cytoplasm. Sulfur carrier protein which probably makes part of a sulfur-relay system. The chain is Sulfur carrier protein TusA from Pseudoalteromonas translucida (strain TAC 125).